We begin with the raw amino-acid sequence, 251 residues long: 3-deoxy-manno-octulosonate cytidylyltransferase (251 aa).

This sequence belongs to the KdsB family.

It is found in the cytoplasm. The catalysed reaction is 3-deoxy-alpha-D-manno-oct-2-ulosonate + CTP = CMP-3-deoxy-beta-D-manno-octulosonate + diphosphate. Its pathway is nucleotide-sugar biosynthesis; CMP-3-deoxy-D-manno-octulosonate biosynthesis; CMP-3-deoxy-D-manno-octulosonate from 3-deoxy-D-manno-octulosonate and CTP: step 1/1. It functions in the pathway bacterial outer membrane biogenesis; lipopolysaccharide biosynthesis. Its function is as follows. Activates KDO (a required 8-carbon sugar) for incorporation into bacterial lipopolysaccharide in Gram-negative bacteria. This chain is 3-deoxy-manno-octulosonate cytidylyltransferase, found in Rhizobium johnstonii (strain DSM 114642 / LMG 32736 / 3841) (Rhizobium leguminosarum bv. viciae).